The following is a 483-amino-acid chain: Protein nucleotidyltransferase YdiU (483 aa).

G87, G89, R90, K110, D122, G123, R173, and R180 together coordinate ATP. D249 serves as the catalytic Proton acceptor. Residues N250 and D259 each contribute to the Mg(2+) site. D259 serves as a coordination point for ATP.

This sequence belongs to the SELO family. Requires Mg(2+) as cofactor. It depends on Mn(2+) as a cofactor.

The enzyme catalyses L-seryl-[protein] + ATP = 3-O-(5'-adenylyl)-L-seryl-[protein] + diphosphate. The catalysed reaction is L-threonyl-[protein] + ATP = 3-O-(5'-adenylyl)-L-threonyl-[protein] + diphosphate. It catalyses the reaction L-tyrosyl-[protein] + ATP = O-(5'-adenylyl)-L-tyrosyl-[protein] + diphosphate. It carries out the reaction L-histidyl-[protein] + UTP = N(tele)-(5'-uridylyl)-L-histidyl-[protein] + diphosphate. The enzyme catalyses L-seryl-[protein] + UTP = O-(5'-uridylyl)-L-seryl-[protein] + diphosphate. The catalysed reaction is L-tyrosyl-[protein] + UTP = O-(5'-uridylyl)-L-tyrosyl-[protein] + diphosphate. In terms of biological role, nucleotidyltransferase involved in the post-translational modification of proteins. It can catalyze the addition of adenosine monophosphate (AMP) or uridine monophosphate (UMP) to a protein, resulting in modifications known as AMPylation and UMPylation. This Pectobacterium atrosepticum (strain SCRI 1043 / ATCC BAA-672) (Erwinia carotovora subsp. atroseptica) protein is Protein nucleotidyltransferase YdiU.